Reading from the N-terminus, the 465-residue chain is MAP kinase-interacting serine/threonine-protein kinase 2 (465 aa).

Residues 23–72 are disordered; that stretch reads ELAFSLDQPDHGDSDFGLQCSARPDMPASQPIDIPDAKKRGKKKKRGRAT. The Nuclear localization signal motif lies at 60 to 66; that stretch reads KKRGKKK. Serine 74 carries the post-translational modification Phosphoserine. Residues 84–388 enclose the Protein kinase domain; sequence QLQEDVLGEG…TPMVLQRNSC (305 aa). Residues 90 to 98 and lysine 113 each bind ATP; that span reads LGEGAHARV. 160–162 lines the staurosporine pocket; it reads EKM. Aspartate 205 functions as the Proton acceptor in the catalytic mechanism. Glutamate 209 contacts staurosporine. Phosphothreonine is present on residues threonine 244 and threonine 249. Zn(2+)-binding residues include cysteine 299, cysteine 311, and cysteine 314. Threonine 379 is modified (phosphothreonine). Phosphoserine occurs at positions 437 and 440. An MAP kinase binding motif is present at residues 444–448; the sequence is LAQRR. Serine 452 is subject to Phosphoserine.

Belongs to the protein kinase superfamily. CAMK Ser/Thr protein kinase family. In terms of assembly, monomer. Interacts with the C-terminal regions of EIF4G1 and EIF4G2; this interaction is promoted when MAPK pathways are repressed but repressed upon ERK proteins activation. Also binds to dephosphorylated MAPK3/ERK1 and MAPK1/ERK2. Isoform 1 interaction with phosphorylated MAPK3/ERK1 and MAPK1/ERK2 protects it from dephosphorylation and inactivation. Isoform 2 interacts with ESR2 and EIF4E in the nucleus. It depends on Mg(2+) as a cofactor. Zn(2+) is required as a cofactor. Post-translationally, dual phosphorylation of Thr-244 and Thr-249 activates the kinase. Phosphorylation of Thr-379 activates the kinase. Phosphorylated upon arsenic trioxide As(2)O(3) treatment. Phosphorylated by MAPK1/ERK2, MAPK11 and MAPK14. Dephosphorylated by PP2A. Ubiquitously expressed in all tissues examined. Isoform 2 is expressed at higher levels in the ovary than is isoform 1.

Its subcellular location is the nucleus. It localises to the PML body. It is found in the cytoplasm. The enzyme catalyses L-seryl-[protein] + ATP = O-phospho-L-seryl-[protein] + ADP + H(+). It carries out the reaction L-threonyl-[protein] + ATP = O-phospho-L-threonyl-[protein] + ADP + H(+). Inhibited by CGP57380 and staurosporine. Activated by phosphorylation in a negative-feedback regulatory manner in response to chemotherapy (e.g. cytarabine) and thus impairs the generation of antileukemic responses. Serine/threonine-protein kinase that phosphorylates SFPQ/PSF, HNRNPA1 and EIF4E. May play a role in the response to environmental stress and cytokines. Appears to regulate translation by phosphorylating EIF4E, thus increasing the affinity of this protein for the 7-methylguanosine-containing mRNA cap. Required for mediating PP2A-inhibition-induced EIF4E phosphorylation. Triggers EIF4E shuttling from cytoplasm to nucleus. Isoform 1 displays a high basal kinase activity, but isoform 2 exhibits a very low kinase activity. Acts as a mediator of the suppressive effects of IFNgamma on hematopoiesis. Negative regulator for signals that control generation of arsenic trioxide As(2)O(3)-dependent apoptosis and anti-leukemic responses. Involved in anti-apoptotic signaling in response to serum withdrawal. The sequence is that of MAP kinase-interacting serine/threonine-protein kinase 2 (MKNK2) from Homo sapiens (Human).